Reading from the N-terminus, the 533-residue chain is Fimbrial subunit type 1 (533 aa).

The signal sequence occupies residues 1–30 (MHSLNTRRGLGLAAAMTLAAGALVAPTGAA). Residues 496–500 (LPLTG) carry the LPXTG sorting signal motif. Thr499 is modified (pentaglycyl murein peptidoglycan amidated threonine). Residues 500-533 (GANGVIFLTIAGALLVAGGAVVAYANKRRHVAKH) constitute a propeptide, removed by sortase.

Its subcellular location is the secreted. It localises to the cell wall. The protein localises to the fimbrium. Its function is as follows. Major fimbrial subunit of A.viscosus. The sequence is that of Fimbrial subunit type 1 from Actinomyces viscosus.